The following is a 177-amino-acid chain: Bifunctional protein PyrR (177 aa).

The PRPP-binding signature appears at 99 to 111; the sequence is VILVDDVIYKGRT.

The protein belongs to the purine/pyrimidine phosphoribosyltransferase family. PyrR subfamily.

It carries out the reaction UMP + diphosphate = 5-phospho-alpha-D-ribose 1-diphosphate + uracil. Regulates the transcription of the pyrimidine nucleotide (pyr) operon in response to exogenous pyrimidines. Functionally, also displays a weak uracil phosphoribosyltransferase activity which is not physiologically significant. The protein is Bifunctional protein PyrR of Microcystis aeruginosa (strain NIES-843 / IAM M-2473).